The chain runs to 450 residues: WD repeat-containing protein ATCSA-1 (450 aa).

WD repeat units follow at residues 41 to 81 (PHRG…DYEA), 101 to 141 (GHKY…AVVD), 148 to 185 (VYRT…FSHT), and 188 to 228 (GHRD…CFRV). A disordered region spans residues 269-298 (LQSKQTGSQSVKGSSSAKASVEKSRQKRIH). Low complexity predominate over residues 271–287 (SKQTGSQSVKGSSSAKA). 2 WD repeats span residues 310–349 (AHYG…NTLV) and 397–436 (GHYE…EDEM).

As to quaternary structure, interacts with DDB1A. As to expression, expressed in roots, leaves, stems, flowers and siliques.

It localises to the nucleus. Functionally, involved in UV-B tolerance and genome integrity. In association with DDB2, is necessary for repair of UV-B-induced DNA lesions. The sequence is that of WD repeat-containing protein ATCSA-1 from Arabidopsis thaliana (Mouse-ear cress).